The following is a 215-amino-acid chain: Ribonuclease T (215 aa).

In terms of domain architecture, Exonuclease spans Val20–Phe194. Residues Asp23, Glu25, His181, and Asp186 each coordinate Mg(2+). Catalysis depends on His181, which acts as the Proton donor/acceptor.

Belongs to the RNase T family. As to quaternary structure, homodimer. It depends on Mg(2+) as a cofactor.

Trims short 3' overhangs of a variety of RNA species, leaving a one or two nucleotide 3' overhang. Responsible for the end-turnover of tRNA: specifically removes the terminal AMP residue from uncharged tRNA (tRNA-C-C-A). Also appears to be involved in tRNA biosynthesis. The protein is Ribonuclease T of Yersinia enterocolitica serotype O:8 / biotype 1B (strain NCTC 13174 / 8081).